The sequence spans 522 residues: MAAQLLEEDVVTCSICLGRYRDPVTLPCGHSFCGNCIQDSWRSCEKSCPECRQPFPEGAKLSRNVKMSTLLQALPVLPAPPAVTPRRDSATSHSARCLRHGRPLEFFCRTEGLCVCSACTVHDCSHHERALLDVERRVREDQLRARVLVTQQQVAQAETQLQELQEQRSRIESSACTLASVVSRRFSSLLQALEKQQASTLSDIEVAKKQALGQVLNEKQRLTDHLRALSQYDQSVQDLLAQADDCIFFQELQQLPEPTESLGPLTSPQWNEEQQLSNVNQLLSPLCELLLEEKSLPKVAAKAADAGPLETLGPLAPVPSAVCPLRKKLWQNYRNLTFDPETANQYLHLSHKDQRVTHHFQAQGPAKSGSFELWQVQCTQSFQTGQHYWEVRVSDHSVTLGVTYPKLSRQKLGTHTDNIGRGPCSWGLCIQEDSMQAWHNGKSQRLRGLPGQLLGVDLNLTSGCLTFYSLEPRTQPLHTFYAVFSQPLFPVFWLLEGRTLTLCHQPEATLPARPQEEATAPS.

N-acetylalanine is present on alanine 2. Residues 13–52 (CSICLGRYRDPVTLPCGHSFCGNCIQDSWRSCEKSCPECR) form an RING-type zinc finger. The segment at 92–134 (SHSARCLRHGRPLEFFCRTEGLCVCSACTVHDCSHHERALLDV) adopts a B box-type zinc-finger fold. Residues 141–229 (DQLRARVLVT…QRLTDHLRAL (89 aa)) are a coiled coil. Phosphoserine is present on serine 187. Residues 316–509 (APVPSAVCPL…LTLCHQPEAT (194 aa)) enclose the B30.2/SPRY domain.

It belongs to the TRIM/RBCC family. In terms of assembly, homo-multimerizes. Interacts with ARRDC4.

It localises to the cytoplasm. It catalyses the reaction S-ubiquitinyl-[E2 ubiquitin-conjugating enzyme]-L-cysteine + [acceptor protein]-L-lysine = [E2 ubiquitin-conjugating enzyme]-L-cysteine + N(6)-ubiquitinyl-[acceptor protein]-L-lysine.. The protein operates within protein modification; protein ubiquitination. Functionally, E3 ubiquitin ligase that plays a role in several processes including innate immnity, autophagy or inflammation. Negatively regulates miRNAs by modulating the ubiquitination and stability of TNRC6A, a protein involved in RNA-mediated gene silencing by both micro-RNAs (miRNAs) and short interfering RNAs. This ubiquitination results in the suppressed expression of miR-138-5p leading to increased autophagy. Upon enteroviral infection, promotes 'Lys-63'-mediated ubiquitination activation of IFIH1/MDA5 leading to innate signaling cascade. Mechanistically, selectively recognizes MDA5 filaments that occur on dsRNAs. Also plays a role in limitation of inflammation through different mechanisms. First, promotes 'Lys-48'-mediated ubiquitination of VCAM1 leading to its degradation and limitation of LPS-induced lung inflammation. In addition, negatively regulates inflammasome activation by promoting 'lys48'-linked ubiquitination of NLRP3 which is critical for the inhibition of NLRP3 inflammasome activation in resting macrophages. This is E3 ubiquitin-protein ligase TRIM65 (Trim65) from Mus musculus (Mouse).